Here is a 499-residue protein sequence, read N- to C-terminus: Isoflavone 2'-hydroxylase (499 aa).

Cysteine 436 contributes to the heme binding site.

Belongs to the cytochrome P450 family. It depends on heme as a cofactor.

Its subcellular location is the membrane. The catalysed reaction is a 2'-unsubstituted isoflavone + reduced [NADPH--hemoprotein reductase] + O2 = a 2'-hydroxyisoflavone + oxidized [NADPH--hemoprotein reductase] + H2O + H(+). Its function is as follows. Catalyzes the hydroxylation of isoflavones, daidzein and formononetin, to yield 2'-hydroxyisoflavones, 2'-hydroxydaidzein, and 2'-hydroxyformononetin, respectively. The protein is Isoflavone 2'-hydroxylase (CYP81E1) of Glycyrrhiza echinata (Licorice).